The primary structure comprises 199 residues: Recombination protein RecR (199 aa).

A C4-type zinc finger spans residues 57–72 (CSICGNFTDRDPCRLC). The Toprim domain occupies 80-175 (SCICVVEEAR…KVTRLAYGLP (96 aa)).

The protein belongs to the RecR family.

May play a role in DNA repair. It seems to be involved in an RecBC-independent recombinational process of DNA repair. It may act with RecF and RecO. The chain is Recombination protein RecR from Moorella thermoacetica (strain ATCC 39073 / JCM 9320).